Consider the following 41-residue polypeptide: Large ribosomal subunit protein bL32c (41 aa).

Belongs to the bacterial ribosomal protein bL32 family.

The protein resides in the plastid. The polypeptide is Large ribosomal subunit protein bL32c (rpl32) (Helicosporidium sp. subsp. Simulium jonesii (Green alga)).